The following is a 165-amino-acid chain: Large ribosomal subunit protein uL10 (165 aa).

This sequence belongs to the universal ribosomal protein uL10 family. In terms of assembly, part of the ribosomal stalk of the 50S ribosomal subunit. The N-terminus interacts with L11 and the large rRNA to form the base of the stalk. The C-terminus forms an elongated spine to which L12 dimers bind in a sequential fashion forming a multimeric L10(L12)X complex.

Functionally, forms part of the ribosomal stalk, playing a central role in the interaction of the ribosome with GTP-bound translation factors. The polypeptide is Large ribosomal subunit protein uL10 (Salmonella agona (strain SL483)).